Reading from the N-terminus, the 859-residue chain is Leucine--tRNA ligase (859 aa).

Positions 42-52 (PYPSGRLHMGH) match the 'HIGH' region motif. The 'KMSKS' region motif lies at 618–622 (KMSKS). Lys621 is an ATP binding site.

The protein belongs to the class-I aminoacyl-tRNA synthetase family.

The protein localises to the cytoplasm. The catalysed reaction is tRNA(Leu) + L-leucine + ATP = L-leucyl-tRNA(Leu) + AMP + diphosphate. The chain is Leucine--tRNA ligase from Shewanella sp. (strain MR-7).